A 308-amino-acid polypeptide reads, in one-letter code: Bacitracin transport ATP-binding protein BcrA (308 aa).

Residues 8 to 236 (IETENLTKQY…NRKYTEFDVS (229 aa)) enclose the ABC transporter domain. Residue 40–47 (GRNGAGKT) participates in ATP binding.

Belongs to the ABC transporter superfamily. The complex is probably composed of two ATP-binding proteins (BcrA) and two transmembrane proteins (BcrB).

Essential for high-level bacitracin resistance. Part of the ABC transporter complex BcrAB. Probably responsible for energy coupling to the transport system. The sequence is that of Bacitracin transport ATP-binding protein BcrA from Enterococcus faecalis (Streptococcus faecalis).